A 266-amino-acid polypeptide reads, in one-letter code: tRNA pseudouridine synthase A (266 aa).

Residue aspartate 57 is the Nucleophile of the active site. Residue tyrosine 115 participates in substrate binding.

Belongs to the tRNA pseudouridine synthase TruA family. In terms of assembly, homodimer.

It catalyses the reaction uridine(38/39/40) in tRNA = pseudouridine(38/39/40) in tRNA. Formation of pseudouridine at positions 38, 39 and 40 in the anticodon stem and loop of transfer RNAs. This is tRNA pseudouridine synthase A from Buchnera aphidicola subsp. Acyrthosiphon pisum (strain APS) (Acyrthosiphon pisum symbiotic bacterium).